Reading from the N-terminus, the 235-residue chain is Fibrillarin-like rRNA/tRNA 2'-O-methyltransferase (235 aa).

Residues 91–92, 110–111, 137–138, and 157–160 each bind S-adenosyl-L-methionine; these read TT, EF, DA, and DVAQ.

This sequence belongs to the methyltransferase superfamily. Fibrillarin family. Interacts with nop5. Component of box C/D small ribonucleoprotein (sRNP) particles that contain rpl7ae, FlpA and nop5, plus a guide RNA.

Functionally, involved in pre-rRNA and tRNA processing. Utilizes the methyl donor S-adenosyl-L-methionine to catalyze the site-specific 2'-hydroxyl methylation of ribose moieties in rRNA and tRNA. Site specificity is provided by a guide RNA that base pairs with the substrate. Methylation occurs at a characteristic distance from the sequence involved in base pairing with the guide RNA. This is Fibrillarin-like rRNA/tRNA 2'-O-methyltransferase from Pyrobaculum aerophilum (strain ATCC 51768 / DSM 7523 / JCM 9630 / CIP 104966 / NBRC 100827 / IM2).